The sequence spans 145 residues: Peptide methionine sulfoxide reductase MsrB (145 aa).

The region spanning 6–129 (KNERLQQLTD…NSAALRFIPV (124 aa)) is the MsrB domain. The active-site Nucleophile is cysteine 118.

This sequence belongs to the MsrB Met sulfoxide reductase family.

It catalyses the reaction L-methionyl-[protein] + [thioredoxin]-disulfide + H2O = L-methionyl-(R)-S-oxide-[protein] + [thioredoxin]-dithiol. The sequence is that of Peptide methionine sulfoxide reductase MsrB from Listeria monocytogenes serotype 4a (strain HCC23).